A 515-amino-acid polypeptide reads, in one-letter code: Bifunctional purine biosynthesis protein PurH (515 aa).

An MGS-like domain is found at 1 to 145 (MTKRALISVS…KNHASVTVVV (145 aa)).

The protein belongs to the PurH family.

It catalyses the reaction (6R)-10-formyltetrahydrofolate + 5-amino-1-(5-phospho-beta-D-ribosyl)imidazole-4-carboxamide = 5-formamido-1-(5-phospho-D-ribosyl)imidazole-4-carboxamide + (6S)-5,6,7,8-tetrahydrofolate. The enzyme catalyses IMP + H2O = 5-formamido-1-(5-phospho-D-ribosyl)imidazole-4-carboxamide. It participates in purine metabolism; IMP biosynthesis via de novo pathway; 5-formamido-1-(5-phospho-D-ribosyl)imidazole-4-carboxamide from 5-amino-1-(5-phospho-D-ribosyl)imidazole-4-carboxamide (10-formyl THF route): step 1/1. The protein operates within purine metabolism; IMP biosynthesis via de novo pathway; IMP from 5-formamido-1-(5-phospho-D-ribosyl)imidazole-4-carboxamide: step 1/1. The chain is Bifunctional purine biosynthesis protein PurH from Streptococcus suis (strain 98HAH33).